The primary structure comprises 153 residues: Catabolic 3-dehydroquinase (153 aa).

The active-site Proton acceptor is the Tyr-24. 3 residues coordinate substrate: Asn-75, His-81, and Asp-88. The active-site Proton donor is His-101. Substrate-binding positions include 102-103 and Arg-112; that span reads VS.

The protein belongs to the type-II 3-dehydroquinase family. As to quaternary structure, homododecamer. Adopts a ring-like structure, composed of an arrangement of two hexameric rings stacked on top of one another.

The enzyme catalyses 3-dehydroquinate = 3-dehydroshikimate + H2O. It participates in aromatic compound metabolism; 3,4-dihydroxybenzoate biosynthesis; 3,4-dihydroxybenzoate from 3-dehydroquinate: step 1/2. Functionally, is involved in the catabolism of quinate. Allows the utilization of quinate as carbon source via the beta-ketoadipate pathway. The polypeptide is Catabolic 3-dehydroquinase (Emericella nidulans (strain FGSC A4 / ATCC 38163 / CBS 112.46 / NRRL 194 / M139) (Aspergillus nidulans)).